Consider the following 215-residue polypeptide: Small ribosomal subunit protein eS1 (215 aa).

The protein belongs to the eukaryotic ribosomal protein eS1 family.

The polypeptide is Small ribosomal subunit protein eS1 (Halorubrum lacusprofundi (strain ATCC 49239 / DSM 5036 / JCM 8891 / ACAM 34)).